We begin with the raw amino-acid sequence, 82 residues long: Escargot/snail protein homolog (82 aa).

4 C2H2-type zinc fingers span residues 1–5 (HQQFH), 18–40 (FSCKNCDKTYVSLGALKMHIRTH), 44–66 (CKCPICGKAFSRPWLLQGHIRTH), and 72–82 (FSCQHCQSAFV).

It belongs to the snail C2H2-type zinc-finger protein family.

It localises to the nucleus. This chain is Escargot/snail protein homolog, found in Calliphora vicina (Blue blowfly).